The chain runs to 205 residues: Small ribosomal subunit protein uS4 (205 aa).

The interval 18 to 46 (NIWGRPKSPVNRREYGPGQHGQRRKGKLS) is disordered. Positions 94-157 (RRLDTVVYRA…KQLTFVLEAN (64 aa)) constitute an S4 RNA-binding domain.

Belongs to the universal ribosomal protein uS4 family. In terms of assembly, part of the 30S ribosomal subunit. Contacts protein S5. The interaction surface between S4 and S5 is involved in control of translational fidelity.

Its function is as follows. One of the primary rRNA binding proteins, it binds directly to 16S rRNA where it nucleates assembly of the body of the 30S subunit. In terms of biological role, with S5 and S12 plays an important role in translational accuracy. This is Small ribosomal subunit protein uS4 from Rhodopseudomonas palustris (strain BisB18).